Consider the following 350-residue polypeptide: UDP-N-acetylenolpyruvoylglucosamine reductase (350 aa).

The FAD-binding PCMH-type domain maps to 24–195 (HVEATARWLL…VAVEFNLPLL (172 aa)). Arg172 is a catalytic residue. Ser245 (proton donor) is an active-site residue. The active site involves Glu342.

This sequence belongs to the MurB family. FAD serves as cofactor.

Its subcellular location is the cytoplasm. It catalyses the reaction UDP-N-acetyl-alpha-D-muramate + NADP(+) = UDP-N-acetyl-3-O-(1-carboxyvinyl)-alpha-D-glucosamine + NADPH + H(+). Its pathway is cell wall biogenesis; peptidoglycan biosynthesis. Functionally, cell wall formation. This is UDP-N-acetylenolpyruvoylglucosamine reductase from Xanthomonas oryzae pv. oryzae (strain PXO99A).